The sequence spans 442 residues: 3-phosphoshikimate 1-carboxyvinyltransferase (442 aa).

Residues lysine 25, serine 26, and arginine 30 each contribute to the 3-phosphoshikimate site. Lysine 25 contributes to the phosphoenolpyruvate binding site. Positions 96 and 124 each coordinate phosphoenolpyruvate. 6 residues coordinate 3-phosphoshikimate: serine 171, serine 172, glutamine 173, serine 203, aspartate 325, and lysine 352. Residue glutamine 173 participates in phosphoenolpyruvate binding. Aspartate 325 serves as the catalytic Proton acceptor. The phosphoenolpyruvate site is built by arginine 356, arginine 400, and lysine 425.

Belongs to the EPSP synthase family. In terms of assembly, monomer.

The protein localises to the cytoplasm. It carries out the reaction 3-phosphoshikimate + phosphoenolpyruvate = 5-O-(1-carboxyvinyl)-3-phosphoshikimate + phosphate. It participates in metabolic intermediate biosynthesis; chorismate biosynthesis; chorismate from D-erythrose 4-phosphate and phosphoenolpyruvate: step 6/7. Functionally, catalyzes the transfer of the enolpyruvyl moiety of phosphoenolpyruvate (PEP) to the 5-hydroxyl of shikimate-3-phosphate (S3P) to produce enolpyruvyl shikimate-3-phosphate and inorganic phosphate. The protein is 3-phosphoshikimate 1-carboxyvinyltransferase of Bordetella parapertussis (strain 12822 / ATCC BAA-587 / NCTC 13253).